The following is a 507-amino-acid chain: uncharacterized protein (507 aa).

3 disordered regions span residues 91 to 162 (NEKT…KKLL), 174 to 255 (EKLQ…QQQQ), and 309 to 422 (KRKL…NYST). Over residues 116–143 (DSSESDSSESESDSSESESESESNETSE) the composition is skewed to acidic residues. The span at 144 to 155 (NESSSSSEPESS) shows a compositional bias: low complexity. Basic and acidic residues predominate over residues 174–193 (EKLQQEQQKQKEAQKPKEKP). Composition is skewed to low complexity over residues 194 to 236 (QQQQ…QQIE), 243 to 255 (PQQQ…QQQQ), and 313 to 350 (QSQL…TNKP). Positions 351–360 (LSKRQKKLLK) are enriched in basic residues. Low complexity predominate over residues 378-409 (NNKNDNSTNDSNNNNDNNNNNKNDTNDSNNDD).

This is an uncharacterized protein from Dictyostelium discoideum (Social amoeba).